Reading from the N-terminus, the 434-residue chain is Serine hydroxymethyltransferase (434 aa).

Residues Leu-133 and Gly-137–Leu-139 contribute to the (6S)-5,6,7,8-tetrahydrofolate site. The residue at position 242 (Lys-242) is an N6-(pyridoxal phosphate)lysine.

Belongs to the SHMT family. As to quaternary structure, homodimer. The cofactor is pyridoxal 5'-phosphate.

It is found in the cytoplasm. It catalyses the reaction (6R)-5,10-methylene-5,6,7,8-tetrahydrofolate + glycine + H2O = (6S)-5,6,7,8-tetrahydrofolate + L-serine. It functions in the pathway one-carbon metabolism; tetrahydrofolate interconversion. It participates in amino-acid biosynthesis; glycine biosynthesis; glycine from L-serine: step 1/1. In terms of biological role, catalyzes the reversible interconversion of serine and glycine with tetrahydrofolate (THF) serving as the one-carbon carrier. This reaction serves as the major source of one-carbon groups required for the biosynthesis of purines, thymidylate, methionine, and other important biomolecules. Also exhibits THF-independent aldolase activity toward beta-hydroxyamino acids, producing glycine and aldehydes, via a retro-aldol mechanism. The chain is Serine hydroxymethyltransferase from Hyphomicrobium methylovorum.